The following is a 324-amino-acid chain: Elongation factor P--(R)-beta-lysine ligase (324 aa).

75–77 (SPE) serves as a coordination point for substrate. ATP contacts are provided by residues 99–101 (RNK) and Asn108. Tyr117 provides a ligand contact to substrate. 243 to 244 (EL) is a binding site for ATP. Glu250 contributes to the substrate binding site. Gly299 serves as a coordination point for ATP.

This sequence belongs to the class-II aminoacyl-tRNA synthetase family. EpmA subfamily. As to quaternary structure, homodimer.

It catalyses the reaction D-beta-lysine + L-lysyl-[protein] + ATP = N(6)-((3R)-3,6-diaminohexanoyl)-L-lysyl-[protein] + AMP + diphosphate + H(+). Functionally, with EpmB is involved in the beta-lysylation step of the post-translational modification of translation elongation factor P (EF-P). Catalyzes the ATP-dependent activation of (R)-beta-lysine produced by EpmB, forming a lysyl-adenylate, from which the beta-lysyl moiety is then transferred to the epsilon-amino group of a conserved specific lysine residue in EF-P. The protein is Elongation factor P--(R)-beta-lysine ligase of Buchnera aphidicola subsp. Acyrthosiphon pisum (strain APS) (Acyrthosiphon pisum symbiotic bacterium).